The sequence spans 4092 residues: Dynein heavy chain, cytoplasmic (4092 aa).

Residues 1 to 1757 (MCKNEARLAN…FISQSGYLLQ (1757 aa)) are stem. Coiled-coil stretches lie at residues 154 to 175 (VETI…QQLH), 486 to 508 (KLEQ…LQNT), 542 to 566 (KVLE…TGLE), 932 to 959 (VIKL…YVKE), 1042 to 1063 (YERD…VEDM), and 1681 to 1705 (KGLL…LVEY). AAA stretches follow at residues 1758 to 1979 (YKFE…VLRN), 2036 to 2273 (QCLK…NDLV), 2379 to 2628 (SLEA…LVRG), and 2722 to 2984 (TFCD…KVGV). ATP contacts are provided by residues 1796 to 1803 (GPAGTGKT), 2074 to 2081 (GKAGCGKT), 2418 to 2425 (GPPGSGKT), and 2760 to 2767 (GASRTGKT). 3 coiled-coil regions span residues 2993 to 3092 (IDGL…KRKE), 3242 to 3300 (KTKA…KSLT), and 3532 to 3608 (ITLT…EEFF). The stalk stretch occupies residues 2993-3300 (IDGLRALVKL…RSISLVKSLT (308 aa)). AAA regions lie at residues 3370–3599 (LVTL…NIEK) and 3760–3970 (LNWF…YLEN).

It belongs to the dynein heavy chain family. As to quaternary structure, the dynein complex consists of at least two heavy chains and a number of intermediate and light chains. Interacts with DYN3.

The protein resides in the cytoplasm. Its subcellular location is the cytoskeleton. Cytoplasmic dynein acts as a motor for the intracellular retrograde motility of vesicles and organelles along microtubules. Dynein has ATPase activity; the force-producing power stroke is thought to occur on release of ADP. Required to maintain uniform nuclear distribution in hyphae. May play an important role in the proper orientation of the mitotic spindle into the budding daughter cell yeast. Probably required for normal progression of the cell cycle. The protein is Dynein heavy chain, cytoplasmic (DYN1) of Saccharomyces cerevisiae (strain ATCC 204508 / S288c) (Baker's yeast).